We begin with the raw amino-acid sequence, 454 residues long: Bifunctional protein GlmU (454 aa).

Residues methionine 1–arginine 231 form a pyrophosphorylase region. UDP-N-acetyl-alpha-D-glucosamine-binding positions include leucine 11–glycine 14, lysine 25, glutamine 78, glycine 83–threonine 84, tyrosine 106–aspartate 108, glycine 143, glutamate 157, asparagine 172, and asparagine 229. Aspartate 108 contributes to the Mg(2+) binding site. Residue asparagine 229 coordinates Mg(2+). Residues alanine 232 to aspartate 252 form a linker region. The segment at glycine 253–proline 454 is N-acetyltransferase. Arginine 318 and lysine 336 together coordinate UDP-N-acetyl-alpha-D-glucosamine. Histidine 348 acts as the Proton acceptor in catalysis. Positions 351 and 362 each coordinate UDP-N-acetyl-alpha-D-glucosamine. Acetyl-CoA contacts are provided by residues alanine 365, asparagine 371–tyrosine 372, serine 390, serine 408, and arginine 425.

This sequence in the N-terminal section; belongs to the N-acetylglucosamine-1-phosphate uridyltransferase family. The protein in the C-terminal section; belongs to the transferase hexapeptide repeat family. In terms of assembly, homotrimer. Requires Mg(2+) as cofactor.

It is found in the cytoplasm. The enzyme catalyses alpha-D-glucosamine 1-phosphate + acetyl-CoA = N-acetyl-alpha-D-glucosamine 1-phosphate + CoA + H(+). It catalyses the reaction N-acetyl-alpha-D-glucosamine 1-phosphate + UTP + H(+) = UDP-N-acetyl-alpha-D-glucosamine + diphosphate. The protein operates within nucleotide-sugar biosynthesis; UDP-N-acetyl-alpha-D-glucosamine biosynthesis; N-acetyl-alpha-D-glucosamine 1-phosphate from alpha-D-glucosamine 6-phosphate (route II): step 2/2. It functions in the pathway nucleotide-sugar biosynthesis; UDP-N-acetyl-alpha-D-glucosamine biosynthesis; UDP-N-acetyl-alpha-D-glucosamine from N-acetyl-alpha-D-glucosamine 1-phosphate: step 1/1. It participates in bacterial outer membrane biogenesis; LPS lipid A biosynthesis. In terms of biological role, catalyzes the last two sequential reactions in the de novo biosynthetic pathway for UDP-N-acetylglucosamine (UDP-GlcNAc). The C-terminal domain catalyzes the transfer of acetyl group from acetyl coenzyme A to glucosamine-1-phosphate (GlcN-1-P) to produce N-acetylglucosamine-1-phosphate (GlcNAc-1-P), which is converted into UDP-GlcNAc by the transfer of uridine 5-monophosphate (from uridine 5-triphosphate), a reaction catalyzed by the N-terminal domain. The chain is Bifunctional protein GlmU from Cereibacter sphaeroides (strain ATCC 17023 / DSM 158 / JCM 6121 / CCUG 31486 / LMG 2827 / NBRC 12203 / NCIMB 8253 / ATH 2.4.1.) (Rhodobacter sphaeroides).